The chain runs to 93 residues: uncharacterized protein (93 aa).

It belongs to the BolA/IbaG family.

This is an uncharacterized protein from Sinorhizobium sp.